The following is a 705-amino-acid chain: Glycogen [starch] synthase isoform 2 (705 aa).

A UDP-binding site is contributed by Arg20. Phosphoserine is present on Ser159. The UDP-alpha-D-glucose site is built by His193 and Arg199. Alpha-D-glucose 6-phosphate-binding residues include His280, Glu281, Gln283, His286, and Lys290. Position 320 (Arg320) interacts with UDP. Residue Arg320 coordinates UDP-alpha-D-glucose. A phosphoserine mark is found at Ser363 and Ser467. His500 contacts alpha-D-glucose 6-phosphate. Residues Glu509, Trp511, and Gly512 each coordinate UDP-alpha-D-glucose. Thr514 provides a ligand contact to UDP. 2 residues coordinate alpha-D-glucose 6-phosphate: Arg583 and Arg587. Residue Ser651 is modified to Phosphoserine. Ser655 bears the Phosphoserine; by PHO85 mark. Phosphoserine; by PKA occurs at positions 661 and 663. Thr668 carries the phosphothreonine; by PHO85 modification. The disordered stretch occupies residues 686-705; it reads SLGVNPAADDDDDGPYADDS. Residues 693–705 are compositionally biased toward acidic residues; that stretch reads ADDDDDGPYADDS.

Belongs to the glycosyltransferase 3 family. Interacts with PCL10. Phosphorylated by the cyclin-CDK PCL10-PHO85. Phosphorylation causes inactivation of enzyme.

It localises to the cytoplasm. The protein localises to the cytosol. It carries out the reaction [(1-&gt;4)-alpha-D-glucosyl](n) + UDP-alpha-D-glucose = [(1-&gt;4)-alpha-D-glucosyl](n+1) + UDP + H(+). It participates in glycan biosynthesis; glycogen biosynthesis. Allosteric activation by glucose-6-phosphate, and phosphorylation by a cAMP-dependent kinase. Functionally, glycogen synthase participates in the glycogen biosynthetic process along with glycogenin and glycogen branching enzyme. Extends the primer composed of a few glucose units formed by glycogenin by adding new glucose units to it. In this context, glycogen synthase transfers the glycosyl residue from UDP-Glc to the non-reducing end of alpha-1,4-glucan. This chain is Glycogen [starch] synthase isoform 2 (GSY2), found in Saccharomyces cerevisiae (strain ATCC 204508 / S288c) (Baker's yeast).